The sequence spans 236 residues: Protein-L-isoaspartate O-methyltransferase 1 (236 aa).

The active site involves Ser86.

The protein belongs to the methyltransferase superfamily. L-isoaspartyl/D-aspartyl protein methyltransferase family.

The protein localises to the cytoplasm. It carries out the reaction [protein]-L-isoaspartate + S-adenosyl-L-methionine = [protein]-L-isoaspartate alpha-methyl ester + S-adenosyl-L-homocysteine. Its function is as follows. Catalyzes the methyl esterification of L-isoaspartyl residues in peptides and proteins that result from spontaneous decomposition of normal L-aspartyl and L-asparaginyl residues. It plays a role in the repair and/or degradation of damaged proteins. The polypeptide is Protein-L-isoaspartate O-methyltransferase 1 (Nitrosospira multiformis (strain ATCC 25196 / NCIMB 11849 / C 71)).